Here is a 399-residue protein sequence, read N- to C-terminus: Succinate--CoA ligase [ADP-forming] subunit beta (399 aa).

Positions 9-254 constitute an ATP-grasp domain; it reads KAVLQPFGVS…TTEEDAKEIE (246 aa). Residues Lys46, 53–55, Glu109, Ser112, and Glu117 contribute to the ATP site; that span reads GRG. 2 residues coordinate Mg(2+): Asn209 and Asp223. Substrate-binding positions include Asn274 and 331-333; that span reads GIM.

The protein belongs to the succinate/malate CoA ligase beta subunit family. As to quaternary structure, heterotetramer of two alpha and two beta subunits. The cofactor is Mg(2+).

It catalyses the reaction succinate + ATP + CoA = succinyl-CoA + ADP + phosphate. The enzyme catalyses GTP + succinate + CoA = succinyl-CoA + GDP + phosphate. It functions in the pathway carbohydrate metabolism; tricarboxylic acid cycle; succinate from succinyl-CoA (ligase route): step 1/1. Functionally, succinyl-CoA synthetase functions in the citric acid cycle (TCA), coupling the hydrolysis of succinyl-CoA to the synthesis of either ATP or GTP and thus represents the only step of substrate-level phosphorylation in the TCA. The beta subunit provides nucleotide specificity of the enzyme and binds the substrate succinate, while the binding sites for coenzyme A and phosphate are found in the alpha subunit. The sequence is that of Succinate--CoA ligase [ADP-forming] subunit beta from Rhodopseudomonas palustris (strain BisA53).